We begin with the raw amino-acid sequence, 566 residues long: Arginine--tRNA ligase (566 aa).

Residues 121 to 131 carry the 'HIGH' region motif; the sequence is ANPNGPFHIGH.

The protein belongs to the class-I aminoacyl-tRNA synthetase family.

The protein localises to the cytoplasm. It catalyses the reaction tRNA(Arg) + L-arginine + ATP = L-arginyl-tRNA(Arg) + AMP + diphosphate. The chain is Arginine--tRNA ligase from Methanococcus maripaludis (strain DSM 14266 / JCM 13030 / NBRC 101832 / S2 / LL).